A 108-amino-acid chain; its full sequence is Transcription factor AmrZ (108 aa).

Functions both as a transcriptional activator and a repressor of multiple genes encoding virulence factors as well as genes involved in environmental adaptation. Represses genes involved in iron homeostasis. Modulates intracellular levels of c-di-GMP which in turn regulates swimming motility and biofilm formation. The sequence is that of Transcription factor AmrZ from Pseudomonas ogarae (strain DSM 112162 / CECT 30235 / F113).